A 638-amino-acid chain; its full sequence is tRNA uridine 5-carboxymethylaminomethyl modification enzyme MnmG (638 aa).

FAD contacts are provided by residues 15–20 (GAGHAG), Ile-127, and Ser-182. 276-290 (GPRYCPSIEDKIVRF) serves as a coordination point for NAD(+). Residue Gln-373 participates in FAD binding.

It belongs to the MnmG family. As to quaternary structure, homodimer. Heterotetramer of two MnmE and two MnmG subunits. FAD serves as cofactor.

The protein resides in the cytoplasm. Functionally, NAD-binding protein involved in the addition of a carboxymethylaminomethyl (cmnm) group at the wobble position (U34) of certain tRNAs, forming tRNA-cmnm(5)s(2)U34. In Streptococcus suis (strain 98HAH33), this protein is tRNA uridine 5-carboxymethylaminomethyl modification enzyme MnmG.